We begin with the raw amino-acid sequence, 332 residues long: Ornithine carbamoyltransferase, catabolic (332 aa).

Carbamoyl phosphate contacts are provided by residues 60 to 63 (STRT), Q87, R111, and 138 to 141 (HPTQ). Residues N170, D230, and 234–235 (SM) contribute to the L-ornithine site. Carbamoyl phosphate contacts are provided by residues 271–272 (CL) and R316.

The protein belongs to the aspartate/ornithine carbamoyltransferase superfamily. OTCase family.

The protein resides in the cytoplasm. It carries out the reaction carbamoyl phosphate + L-ornithine = L-citrulline + phosphate + H(+). The protein operates within amino-acid degradation; L-arginine degradation via ADI pathway; carbamoyl phosphate from L-arginine: step 2/2. Reversibly catalyzes the transfer of the carbamoyl group from carbamoyl phosphate (CP) to the N(epsilon) atom of ornithine (ORN) to produce L-citrulline. The protein is Ornithine carbamoyltransferase, catabolic of Bacillus thuringiensis subsp. konkukian (strain 97-27).